A 345-amino-acid chain; its full sequence is Uroporphyrinogen decarboxylase (345 aa).

Substrate contacts are provided by residues 27 to 31 (RQAGR), Phe-46, Asp-76, Tyr-152, Ser-207, and His-321.

It belongs to the uroporphyrinogen decarboxylase family. As to quaternary structure, homodimer.

It localises to the cytoplasm. The enzyme catalyses uroporphyrinogen III + 4 H(+) = coproporphyrinogen III + 4 CO2. The protein operates within porphyrin-containing compound metabolism; protoporphyrin-IX biosynthesis; coproporphyrinogen-III from 5-aminolevulinate: step 4/4. In terms of biological role, catalyzes the decarboxylation of four acetate groups of uroporphyrinogen-III to yield coproporphyrinogen-III. This chain is Uroporphyrinogen decarboxylase, found in Staphylococcus aureus (strain bovine RF122 / ET3-1).